The following is a 133-amino-acid chain: ATP synthase epsilon chain (133 aa).

The segment at 103–133 is disordered; the sequence is VSQMEGQEPSTEKIKAQQNFNRARARVQATK.

The protein belongs to the ATPase epsilon chain family. In terms of assembly, F-type ATPases have 2 components, CF(1) - the catalytic core - and CF(0) - the membrane proton channel. CF(1) has five subunits: alpha(3), beta(3), gamma(1), delta(1), epsilon(1). CF(0) has three main subunits: a, b and c.

It localises to the cellular thylakoid membrane. Functionally, produces ATP from ADP in the presence of a proton gradient across the membrane. The protein is ATP synthase epsilon chain of Prochlorococcus marinus (strain MIT 9313).